A 125-amino-acid polypeptide reads, in one-letter code: UPF0102 protein PSPA7_4996 (125 aa).

It belongs to the UPF0102 family.

This Pseudomonas paraeruginosa (strain DSM 24068 / PA7) (Pseudomonas aeruginosa (strain PA7)) protein is UPF0102 protein PSPA7_4996.